We begin with the raw amino-acid sequence, 441 residues long: Arginine biosynthesis bifunctional protein ArgJ, mitochondrial (441 aa).

The substrate site is built by Thr177, Lys204, Thr215, Glu301, Asn436, and Ser441. The Nucleophile role is filled by Thr215.

Belongs to the ArgJ family. Heterodimer of an alpha and a beta chain. In terms of processing, the alpha and beta chains are autoproteolytically processed from a single precursor protein within the mitochondrion.

It is found in the mitochondrion matrix. It catalyses the reaction N(2)-acetyl-L-ornithine + L-glutamate = N-acetyl-L-glutamate + L-ornithine. The enzyme catalyses L-glutamate + acetyl-CoA = N-acetyl-L-glutamate + CoA + H(+). It functions in the pathway amino-acid biosynthesis; L-arginine biosynthesis; L-ornithine and N-acetyl-L-glutamate from L-glutamate and N(2)-acetyl-L-ornithine (cyclic): step 1/1. It participates in amino-acid biosynthesis; L-arginine biosynthesis; N(2)-acetyl-L-ornithine from L-glutamate: step 1/4. Catalyzes two activities which are involved in the cyclic version of arginine biosynthesis: the synthesis of acetylglutamate from glutamate and acetyl-CoA, and of ornithine by transacetylation between acetylornithine and glutamate. This chain is Arginine biosynthesis bifunctional protein ArgJ, mitochondrial, found in Kluyveromyces lactis (strain ATCC 8585 / CBS 2359 / DSM 70799 / NBRC 1267 / NRRL Y-1140 / WM37) (Yeast).